Reading from the N-terminus, the 437-residue chain is Glutamate-1-semialdehyde 2,1-aminomutase (437 aa).

Lysine 274 is modified (N6-(pyridoxal phosphate)lysine).

Belongs to the class-III pyridoxal-phosphate-dependent aminotransferase family. HemL subfamily. Homodimer. The cofactor is pyridoxal 5'-phosphate.

The protein resides in the cytoplasm. It catalyses the reaction (S)-4-amino-5-oxopentanoate = 5-aminolevulinate. It functions in the pathway porphyrin-containing compound metabolism; protoporphyrin-IX biosynthesis; 5-aminolevulinate from L-glutamyl-tRNA(Glu): step 2/2. The polypeptide is Glutamate-1-semialdehyde 2,1-aminomutase (Paracidovorax citrulli (strain AAC00-1) (Acidovorax citrulli)).